A 105-amino-acid polypeptide reads, in one-letter code: Small cysteine and glycine repeat-containing protein 10 (105 aa).

Residues 4-41 (CGCGGCGGRCSGGCGGGCGGGCGGGCGGGCGGCGGGCG) form a 10 X 2 AA repeats of CG region.

This sequence belongs to the KRTAP type 28 family.

Its function is as follows. In the hair cortex, hair keratin intermediate filaments are embedded in an interfilamentous matrix, consisting of hair keratin-associated proteins (KRTAP), which are essential for the formation of a rigid and resistant hair shaft through their extensive disulfide bond cross-linking with abundant cysteine residues of hair keratins. The matrix proteins include the high-sulfur and high-glycine-tyrosine keratins. The chain is Small cysteine and glycine repeat-containing protein 10 from Homo sapiens (Human).